We begin with the raw amino-acid sequence, 372 residues long: Probable dual-specificity RNA methyltransferase RlmN (372 aa).

Residues 1–20 (MTSLPLTPVNPDAPARRAAM) form a disordered region. Catalysis depends on Glu112, which acts as the Proton acceptor. In terms of domain architecture, Radical SAM core spans 118–357 (YPDRVTVCLS…STTVRDTRGR (240 aa)). Cys125 and Cys363 are oxidised to a cystine. [4Fe-4S] cluster is bound by residues Cys132, Cys136, and Cys139. Residues 187-188 (GE), Ser221, 244-246 (SLH), and Asn320 contribute to the S-adenosyl-L-methionine site. The active-site S-methylcysteine intermediate is the Cys363.

It belongs to the radical SAM superfamily. RlmN family. Requires [4Fe-4S] cluster as cofactor.

It localises to the cytoplasm. It catalyses the reaction adenosine(2503) in 23S rRNA + 2 reduced [2Fe-2S]-[ferredoxin] + 2 S-adenosyl-L-methionine = 2-methyladenosine(2503) in 23S rRNA + 5'-deoxyadenosine + L-methionine + 2 oxidized [2Fe-2S]-[ferredoxin] + S-adenosyl-L-homocysteine. It carries out the reaction adenosine(37) in tRNA + 2 reduced [2Fe-2S]-[ferredoxin] + 2 S-adenosyl-L-methionine = 2-methyladenosine(37) in tRNA + 5'-deoxyadenosine + L-methionine + 2 oxidized [2Fe-2S]-[ferredoxin] + S-adenosyl-L-homocysteine. In terms of biological role, specifically methylates position 2 of adenine 2503 in 23S rRNA and position 2 of adenine 37 in tRNAs. This Salinispora tropica (strain ATCC BAA-916 / DSM 44818 / JCM 13857 / NBRC 105044 / CNB-440) protein is Probable dual-specificity RNA methyltransferase RlmN.